A 1300-amino-acid chain; its full sequence is uncharacterized protein (1300 aa).

The first 26 residues, 1 to 26 (MGYKLKRWPLVAFTFTGIGLGVVLAA), serve as a signal peptide directing secretion. Cys-27 carries N-palmitoyl cysteine lipidation. Cys-27 carries S-diacylglycerol cysteine lipidation. Over residues 464-478 (AMAAASTGADSSSGT) the composition is skewed to low complexity. Disordered regions lie at residues 464–487 (AMAA…SGGN), 620–639 (ASVS…DTQE), 774–797 (DSQK…NDKK), and 1244–1269 (KMSD…SPRT). 2 stretches are compositionally biased toward polar residues: residues 620 to 637 (ASVS…STDT) and 774 to 783 (DSQKSTNTVK). A compositionally biased stretch (basic and acidic residues) spans 785 to 797 (PDIKPTRENNDKK). Residues 1257–1269 (TIRKPKPHHSPRT) are compositionally biased toward basic residues.

It belongs to the MG307/MG309/MG338 family.

Its subcellular location is the cell membrane. This is an uncharacterized protein from Mycoplasma pneumoniae (strain ATCC 29342 / M129 / Subtype 1) (Mycoplasmoides pneumoniae).